The primary structure comprises 288 residues: Ribosome biogenesis GTPase A (288 aa).

The region spanning 14 to 179 (RRQVTEKLKL…LLDTPGILWP (166 aa)) is the CP-type G domain. Residues 58 to 61 (NKVD), 131 to 136 (NVGKST), and glycine 175 each bind GTP.

It belongs to the TRAFAC class YlqF/YawG GTPase family. MTG1 subfamily. Interacts with ctc. Interacts with the immature 50S ribosome subunit. 2 molecules of rbgA bind to one 50S subunit.

It localises to the cytoplasm. Functionally, essential protein that is required for a late step of 50S ribosomal subunit assembly. Has GTPase activity that is stimulated by interaction with the immature 50S ribosome subunit. Binds to the 23S rRNA. Required for the association of ribosomal proteins rplP and rpmA with the large subunit. This chain is Ribosome biogenesis GTPase A, found in Priestia megaterium (strain DSM 319 / IMG 1521) (Bacillus megaterium).